The chain runs to 167 residues: Large ribosomal subunit protein uL15 (167 aa).

The segment covering Met-1–Pro-10 has biased composition (polar residues). Residues Met-1–Gly-37 form a disordered region. The segment covering Arg-21–Val-35 has biased composition (gly residues).

The protein belongs to the universal ribosomal protein uL15 family. Part of the 50S ribosomal subunit.

In terms of biological role, binds to the 23S rRNA. The sequence is that of Large ribosomal subunit protein uL15 from Methylobacterium radiotolerans (strain ATCC 27329 / DSM 1819 / JCM 2831 / NBRC 15690 / NCIMB 10815 / 0-1).